The primary structure comprises 739 residues: MSSISLIQPDRDLFSWPQYWAACFGPAPFLPMSREEMDQLGWDSCDIILVTGDAYVDHPSFGMAICGRMLEAQGFRVGIIAQPDWSSKDDFMRLGKPNLFFGVTAGNMDSMINRYTADRRLRHDDAYTPDNVAGKRPDRATLVYTQRCKEAWKDVPVILGGIEASLRRTAHYDYWSDTVRRSVLVDSKADMLMFGNGERPLVEVAHRLAMGEPISEIRDVRNTAIIVKEALPGWSGVDSTRLDTPGKIDPIPHPYGEDLPCADNKPVAPKKQEAKAVTVQPPRPKPWEKTYVLLPSFEKVKGDKVLYAHASRILHHETNPGCARALMQKHGDRYVWINPPAIPLSTEEMDSVFALPYKRVPHPAYGNARIPAYEMIRFSVNIMRGCFGGCSFCSITEHEGRIIQSRSEDSIINEIEAIRDTVPGFTGVISDLGGPTANMYMLRCKSPRAEQTCRRLSCVYPDICPHMDTNHEPTINLYRRARDLKGIKKILIASGVRYDIAVEDPRYIKELATHHVGGYLKIAPEHTEEGPLSKMMKPGMGSYDRFKELFDTYSKQAGKEQYLIPYFISAHPGTRDEDMVNLALWLKKHRFRLDQVQNFYPSPLANSTTMYYTGKNPLAKIGYKSEDVFVPKGDKQRRLHKALLRYHDPANWPLIRQALEAMGKKHLIGSRRDCLVPAPTIEEMREARRQNRNTRPALTKHTPMATQCQTPATAKKASSTQSRPVNAGAKKRPKAAVGR.

The 279-residue stretch at 372-650 (AYEMIRFSVN…KALLRYHDPA (279 aa)) folds into the Radical SAM core domain. The [4Fe-4S] cluster site is built by Cys-386, Cys-390, and Cys-393. The segment at 686–739 (EARRQNRNTRPALTKHTPMATQCQTPATAKKASSTQSRPVNAGAKKRPKAAVGR) is disordered. Residues 704–724 (MATQCQTPATAKKASSTQSRP) are compositionally biased toward polar residues. The segment covering 729 to 739 (AKKRPKAAVGR) has biased composition (basic residues).

The protein belongs to the UPF0313 family. [4Fe-4S] cluster is required as a cofactor.

The polypeptide is UPF0313 protein YgiQ (Escherichia coli O157:H7).